Consider the following 72-residue polypeptide: Large ribosomal subunit protein bL31 (72 aa).

The Zn(2+) site is built by Cys16, Cys18, Cys36, and Cys39.

This sequence belongs to the bacterial ribosomal protein bL31 family. Type A subfamily. Part of the 50S ribosomal subunit. The cofactor is Zn(2+).

In terms of biological role, binds the 23S rRNA. The chain is Large ribosomal subunit protein bL31 from Geobacter sp. (strain M21).